The chain runs to 145 residues: MGRGRGKRVVRKLKLQIPGGQANPAPPVGPALGQAQVNIGEFVRQFNDATRDRMGQLIPVEITVYEDRSFTFVTKTPPAAFLLKQAAGVEKGSGEPNRSAAGRVSRAQVEEIARTKMPDLNAADVEAAVKIIEGTARSMGIKVEQ.

The protein belongs to the universal ribosomal protein uL11 family. In terms of assembly, part of the ribosomal stalk of the 50S ribosomal subunit. Interacts with L10 and the large rRNA to form the base of the stalk. L10 forms an elongated spine to which L12 dimers bind in a sequential fashion forming a multimeric L10(L12)X complex. One or more lysine residues are methylated.

Functionally, forms part of the ribosomal stalk which helps the ribosome interact with GTP-bound translation factors. The polypeptide is Large ribosomal subunit protein uL11 (Rubrobacter xylanophilus (strain DSM 9941 / JCM 11954 / NBRC 16129 / PRD-1)).